Consider the following 274-residue polypeptide: Putative pyruvate, phosphate dikinase regulatory protein (274 aa).

153–160 lines the ADP pocket; it reads GISRTSKT.

It belongs to the pyruvate, phosphate/water dikinase regulatory protein family. PDRP subfamily.

The enzyme catalyses N(tele)-phospho-L-histidyl/L-threonyl-[pyruvate, phosphate dikinase] + ADP = N(tele)-phospho-L-histidyl/O-phospho-L-threonyl-[pyruvate, phosphate dikinase] + AMP + H(+). It catalyses the reaction N(tele)-phospho-L-histidyl/O-phospho-L-threonyl-[pyruvate, phosphate dikinase] + phosphate + H(+) = N(tele)-phospho-L-histidyl/L-threonyl-[pyruvate, phosphate dikinase] + diphosphate. Functionally, bifunctional serine/threonine kinase and phosphorylase involved in the regulation of the pyruvate, phosphate dikinase (PPDK) by catalyzing its phosphorylation/dephosphorylation. This Bartonella henselae (strain ATCC 49882 / DSM 28221 / CCUG 30454 / Houston 1) (Rochalimaea henselae) protein is Putative pyruvate, phosphate dikinase regulatory protein.